A 339-amino-acid polypeptide reads, in one-letter code: Glyceraldehyde-3-phosphate dehydrogenase (339 aa).

NAD(+) contacts are provided by residues 12-13 (RI), Asp39, Arg84, and Ser127. Residues 157–159 (SCT), Thr188, Arg203, 216–217 (TG), and Arg239 contribute to the D-glyceraldehyde 3-phosphate site. Cys158 serves as the catalytic Nucleophile. Asn320 lines the NAD(+) pocket.

It belongs to the glyceraldehyde-3-phosphate dehydrogenase family. In terms of assembly, homotetramer.

Its subcellular location is the cytoplasm. The catalysed reaction is D-glyceraldehyde 3-phosphate + phosphate + NAD(+) = (2R)-3-phospho-glyceroyl phosphate + NADH + H(+). Its pathway is carbohydrate degradation; glycolysis; pyruvate from D-glyceraldehyde 3-phosphate: step 1/5. Catalyzes the oxidative phosphorylation of glyceraldehyde 3-phosphate (G3P) to 1,3-bisphosphoglycerate (BPG) using the cofactor NAD. The first reaction step involves the formation of a hemiacetal intermediate between G3P and a cysteine residue, and this hemiacetal intermediate is then oxidized to a thioester, with concomitant reduction of NAD to NADH. The reduced NADH is then exchanged with the second NAD, and the thioester is attacked by a nucleophilic inorganic phosphate to produce BPG. This Mycobacterium leprae (strain TN) protein is Glyceraldehyde-3-phosphate dehydrogenase (gapA).